The primary structure comprises 171 residues: Cytochrome c oxidase subunit 5b-2, mitochondrial (171 aa).

The transit peptide at M1 to I54 directs the protein to the mitochondrion. Zn(2+) contacts are provided by C121, C145, and C148.

Belongs to the cytochrome c oxidase subunit 5B (TC 3.D.4.11) family.

The protein localises to the mitochondrion inner membrane. This protein is one of the nuclear-coded polypeptide chains of cytochrome c oxidase, the terminal oxidase in mitochondrial electron transport. The chain is Cytochrome c oxidase subunit 5b-2, mitochondrial (COX5B-2) from Arabidopsis thaliana (Mouse-ear cress).